A 555-amino-acid polypeptide reads, in one-letter code: Splicing factor U2af large subunit A (555 aa).

Positions 1 to 165 (MRDYEGNGVD…ISGFDMAPPT (165 aa)) are disordered. Basic and acidic residues-rich tracts occupy residues 23 to 81 (ISRD…EKDR) and 90 to 127 (RDRS…DRED). A compositionally biased stretch (basic residues) spans 143–155 (SKSRSRSPSKSKR). RRM domains follow at residues 221 to 304 (RRVY…RPSD), 341 to 419 (DRIF…RANQ), and 460 to 546 (EVVT…YPEN).

The protein belongs to the splicing factor SR family. In terms of tissue distribution, expressed in stems, leaves and apical buds.

It localises to the nucleus. In terms of biological role, necessary for the splicing of pre-mRNA. Binds to the U -enriched regions of plant introns. The chain is Splicing factor U2af large subunit A (U2AF65A) from Nicotiana plumbaginifolia (Leadwort-leaved tobacco).